Here is a 487-residue protein sequence, read N- to C-terminus: NGFI-A-binding protein 1 (487 aa).

The tract at residues 4–82 (ALPRTLGELQ…RDWVTNPGLF (79 aa)) is NCD1. Residues K126, K129, and K143 each participate in a glycyl lysine isopeptide (Lys-Gly) (interchain with G-Cter in SUMO2) cross-link. A disordered region spans residues 162–188 (QGHHATESEHSLSPADLGSPASPKESS). 2 positions are modified to phosphoserine: S172 and S183. A Glycyl lysine isopeptide (Lys-Gly) (interchain with G-Cter in SUMO2) cross-link involves residue K212. Residues 221-310 (LLKTNKKLAK…ARQISREVTY (90 aa)) form an NCD2 region. The necessary for nuclear localization stretch occupies residues 307 to 338 (EVTYKYTYRTTKSKCGERDELSPKRIKVEDGF). Residue S328 is modified to Phosphoserine. A Glycyl lysine isopeptide (Lys-Gly) (interchain with G-Cter in SUMO1); alternate cross-link involves residue K333. Residue K333 forms a Glycyl lysine isopeptide (Lys-Gly) (interchain with G-Cter in SUMO2); alternate linkage. Glycyl lysine isopeptide (Lys-Gly) (interchain with G-Cter in SUMO2) cross-links involve residues K355, K369, and K373. The disordered stretch occupies residues 399–434 (YRQSSEEHSPNGLTSDNSDGQGERPLNLRMPNLQNR). S407 is subject to Phosphoserine. Residues 409 to 418 (NGLTSDNSDG) are compositionally biased toward polar residues. Glycyl lysine isopeptide (Lys-Gly) (interchain with G-Cter in SUMO2) cross-links involve residues K454, K465, and K477. K480 participates in a covalent cross-link: Glycyl lysine isopeptide (Lys-Gly) (interchain with G-Cter in SUMO1); alternate. K480 participates in a covalent cross-link: Glycyl lysine isopeptide (Lys-Gly) (interchain with G-Cter in SUMO2); alternate.

This sequence belongs to the NAB family. As to quaternary structure, homomultimers may associate with EGR1 bound to DNA. In terms of tissue distribution, isoform Short is found in myeloid leukemia cell line KG-1.

It is found in the nucleus. Acts as a transcriptional repressor for zinc finger transcription factors EGR1 and EGR2. In Homo sapiens (Human), this protein is NGFI-A-binding protein 1 (NAB1).